The chain runs to 439 residues: Testican-1 (439 aa).

The signal sequence occupies residues 1–21 (MPAIAVLAAAAAAWCFLQVES). Disulfide bonds link Cys86–Cys97, Cys91–Cys107, Cys136–Cys166, Cys139–Cys159, and Cys148–Cys180. A Kazal-like domain is found at 130 to 182 (PSNLVKCKPCPVAQSAMVCGSDGHSYTSKCKLEFHACSTGKSLATLCDGPCPC). The O-linked (GalNAc...) threonine glycan is linked to Thr228. The Thyroglobulin type-1 domain occupies 310 to 376 (GLPCQNEMNR…GSRKQGAVSC (67 aa)). 3 disulfides stabilise this stretch: Cys313-Cys337, Cys348-Cys355, and Cys357-Cys376. Residues Ser383 and Ser388 are each glycosylated (O-linked (Xyl...) (glycosaminoglycan) serine). The disordered stretch occupies residues 415–439 (VHTRAVTEDDEDEDDDKEDEVGYIW). Acidic residues predominate over residues 422-439 (EDDEDEDDDKEDEVGYIW).

Post-translationally, O-glycosylated. Glycosaminoglycan that contains chondroitin sulfate and heparan sulfate.

The protein localises to the secreted. It localises to the extracellular space. The protein resides in the extracellular matrix. In terms of biological role, may play a role in cell-cell and cell-matrix interactions. May contribute to various neuronal mechanisms in the central nervous system. The polypeptide is Testican-1 (SPOCK1) (Homo sapiens (Human)).